Here is a 256-residue protein sequence, read N- to C-terminus: Thiazole synthase (256 aa).

K102 serves as the catalytic Schiff-base intermediate with DXP. 1-deoxy-D-xylulose 5-phosphate is bound by residues G163, 189–190 (AG), and 211–212 (AT).

This sequence belongs to the ThiG family. Homotetramer. Forms heterodimers with either ThiH or ThiS.

It localises to the cytoplasm. It carries out the reaction [ThiS sulfur-carrier protein]-C-terminal-Gly-aminoethanethioate + 2-iminoacetate + 1-deoxy-D-xylulose 5-phosphate = [ThiS sulfur-carrier protein]-C-terminal Gly-Gly + 2-[(2R,5Z)-2-carboxy-4-methylthiazol-5(2H)-ylidene]ethyl phosphate + 2 H2O + H(+). The protein operates within cofactor biosynthesis; thiamine diphosphate biosynthesis. Its function is as follows. Catalyzes the rearrangement of 1-deoxy-D-xylulose 5-phosphate (DXP) to produce the thiazole phosphate moiety of thiamine. Sulfur is provided by the thiocarboxylate moiety of the carrier protein ThiS. In vitro, sulfur can be provided by H(2)S. The sequence is that of Thiazole synthase from Nocardia farcinica (strain IFM 10152).